The chain runs to 701 residues: Elongation factor G (701 aa).

Residues 10–290 (AKVRNIGIMA…AVVDYLPSPL (281 aa)) form the tr-type G domain. GTP is bound by residues 19–26 (AHIDAGKT), 83–87 (DTPGH), and 137–140 (NKMD).

Belongs to the TRAFAC class translation factor GTPase superfamily. Classic translation factor GTPase family. EF-G/EF-2 subfamily.

Its subcellular location is the cytoplasm. Functionally, catalyzes the GTP-dependent ribosomal translocation step during translation elongation. During this step, the ribosome changes from the pre-translocational (PRE) to the post-translocational (POST) state as the newly formed A-site-bound peptidyl-tRNA and P-site-bound deacylated tRNA move to the P and E sites, respectively. Catalyzes the coordinated movement of the two tRNA molecules, the mRNA and conformational changes in the ribosome. This is Elongation factor G from Tropheryma whipplei (strain Twist) (Whipple's bacillus).